A 110-amino-acid polypeptide reads, in one-letter code: MKEVKAIHKYAKTSAFKVRLVANQIRLKSVDEALNILSFSNKKAAVLIKKVLNSAISNAEHNDGLDIDELFVASICIDEGSTMKRIRPRAKGKANRILKRTSHITVGVSK.

It belongs to the universal ribosomal protein uL22 family. Part of the 50S ribosomal subunit.

Its function is as follows. This protein binds specifically to 23S rRNA; its binding is stimulated by other ribosomal proteins, e.g. L4, L17, and L20. It is important during the early stages of 50S assembly. It makes multiple contacts with different domains of the 23S rRNA in the assembled 50S subunit and ribosome. In terms of biological role, the globular domain of the protein is located near the polypeptide exit tunnel on the outside of the subunit, while an extended beta-hairpin is found that lines the wall of the exit tunnel in the center of the 70S ribosome. In Ruthia magnifica subsp. Calyptogena magnifica, this protein is Large ribosomal subunit protein uL22.